Consider the following 611-residue polypeptide: MKLLVVTILAGLAVCHGATKEEIVATEYLQNINKELAKHTNVETEVSWAYASNITDENERLRNEISAENAKFLKEVAKDIQKFNWRTYGSADVRRQFKSLSKTGYSALPAEDYAELLEVLSAMESNFAKVRVCDYKNSAKCDLSLDPEIEEIITKSRDPEELKYYWTQFYDKAGTPTRSNFEKYVELNTKSAKLNNFTDGAEVWLDEYEDATFEDQLEAIFEDIKPLYDQVHGYVRYRLNKFYGDEVVSKTGPLPMHLLGNMWAQQWSSIADIVSPFPEKPLVDVSDEMVAQGYTPLKMFQMGDDFFQSMGLKKLPQEFWDKSILEKPDDGRDLVCHASAWDFYLTDDVRIKQCTRVTQDQFFTVHHEMGHIQYFLQYQHQPFVYRTGANPGFHEAVGDVLSLSVSTPKHLERVGLLKNYVSDNEARINQLFLTALDKIVFLPFAFTMDKYRWALFRGQADKSEWNCAFWKLREEYSGIEPPVVRTEKDFDAPAKYHVSADVEYLRYLVSFIIQFQFYKSACITAGEYVPNQTEYPLDNCDIYGSKEAGKLFENMLSLGASKPWPDALEAFNGERTMTGKAIAEYFEPLRVWLEAVAVESLCHQRYKNVDL.

Positions M1–G17 are cleaved as a signal peptide. One can recognise a Peptidase M2 domain in the interval T19 to K607. N-linked (GlcNAc...) asparagine glycosylation occurs at N53. A disulfide bridge connects residues C133 and C141. Residue N196 is glycosylated (N-linked (GlcNAc...) asparagine). C336 and C354 are oxidised to a cystine. A Zn(2+)-binding site is contributed by H367. The active-site Proton acceptor is the E368. Positions 371 and 395 each coordinate Zn(2+). H497 acts as the Proton donor in catalysis. C522 and C540 form a disulfide bridge. N531 carries an N-linked (GlcNAc...) asparagine glycan.

It belongs to the peptidase M2 family. Requires Zn(2+) as cofactor. Expressed in the compound ganglion and in the posterior region of the midgut.

It is found in the secreted. The protein resides in the extracellular space. It catalyses the reaction Release of a C-terminal dipeptide, oligopeptide-|-Xaa-Yaa, when Xaa is not Pro, and Yaa is neither Asp nor Glu. Thus, conversion of angiotensin I to angiotensin II, with increase in vasoconstrictor activity, but no action on angiotensin II.. Its function is as follows. Involved in the specific maturation or degradation of a number of bioactive peptides. This is Angiotensin-converting enzyme (ACE) from Haematobia irritans exigua (Buffalo fly).